We begin with the raw amino-acid sequence, 258 residues long: tRNA pseudouridine synthase A (258 aa).

Asp-52 (nucleophile) is an active-site residue. Tyr-110 serves as a coordination point for substrate.

It belongs to the tRNA pseudouridine synthase TruA family. Homodimer.

The enzyme catalyses uridine(38/39/40) in tRNA = pseudouridine(38/39/40) in tRNA. Formation of pseudouridine at positions 38, 39 and 40 in the anticodon stem and loop of transfer RNAs. In Francisella tularensis subsp. tularensis (strain FSC 198), this protein is tRNA pseudouridine synthase A.